We begin with the raw amino-acid sequence, 396 residues long: Argininosuccinate synthase (396 aa).

ATP contacts are provided by residues 10-18 (AYSGGLDTS) and A37. L-citrulline is bound by residues Y88 and S93. ATP is bound at residue G118. Residues T120, N124, and D125 each contribute to the L-aspartate site. N124 lines the L-citrulline pocket. R128, S176, S185, E261, and Y273 together coordinate L-citrulline.

This sequence belongs to the argininosuccinate synthase family. Type 1 subfamily. In terms of assembly, homotetramer.

It localises to the cytoplasm. It catalyses the reaction L-citrulline + L-aspartate + ATP = 2-(N(omega)-L-arginino)succinate + AMP + diphosphate + H(+). Its pathway is amino-acid biosynthesis; L-arginine biosynthesis; L-arginine from L-ornithine and carbamoyl phosphate: step 2/3. The sequence is that of Argininosuccinate synthase from Nitratidesulfovibrio vulgaris (strain ATCC 29579 / DSM 644 / CCUG 34227 / NCIMB 8303 / VKM B-1760 / Hildenborough) (Desulfovibrio vulgaris).